Reading from the N-terminus, the 616-residue chain is Coagulation factor XII (616 aa).

A signal peptide spans Met-1–Leu-19. The Fibronectin type-II domain occupies Val-42–Glu-90. 13 disulfide bridges follow: Cys-47–Cys-73, Cys-61–Cys-88, Cys-98–Cys-110, Cys-104–Cys-119, Cys-121–Cys-130, Cys-135–Cys-163, Cys-161–Cys-170, Cys-178–Cys-189, Cys-183–Cys-198, Cys-200–Cys-209, Cys-217–Cys-295, Cys-238–Cys-277, and Cys-266–Cys-290. An EGF-like 1 domain is found at Val-94–Gln-131. Thr-109 carries O-linked (Fuc) threonine glycosylation. In terms of domain architecture, Fibronectin type-I spans Glu-133–Val-173. Residues Ala-174–Asp-210 enclose the EGF-like 2 domain. The region spanning Arg-216–Cys-295 is the Kringle domain. Asn-249, Asn-271, and Asn-335 each carry an N-linked (GlcNAc...) asparagine glycan. Residues Pro-303–Ala-342 are disordered. The segment covering Pro-325–Ser-338 has biased composition (polar residues). Intrachain disulfides connect Cys-358-Cys-485, Cys-396-Cys-412, Cys-404-Cys-474, Cys-435-Cys-438, Cys-501-Cys-570, Cys-533-Cys-549, and Cys-560-Cys-591. The 244-residue stretch at Ile-372–Thr-615 folds into the Peptidase S1 domain. The active-site Charge relay system is His-411. The N-linked (GlcNAc...) asparagine glycan is linked to Asn-432. The Charge relay system role is filled by Asp-460. Ser-564 serves as the catalytic Charge relay system.

The protein belongs to the peptidase S1 family. As to quaternary structure, interacts with HRG; the interaction, which is enhanced in the presence of zinc ions and inhibited by heparin-binding, inhibits factor XII autoactivation and contact-initiated coagulation. O- and N-glycosylated.

The protein resides in the secreted. It catalyses the reaction Selective cleavage of Arg-|-Ile bonds in factor VII to form factor VIIa and factor XI to form factor XIa.. Activity is promoted in the presence of negatively charged surfaces. Functionally, factor XII is a serum glycoprotein that participates in the initiation of blood coagulation, fibrinolysis, and the generation of bradykinin and angiotensin. Prekallikrein is cleaved by factor XII to form kallikrein, which then cleaves factor XII first to alpha-factor XIIa and then trypsin cleaves it to beta-factor XIIa. Alpha-factor XIIa activates factor XI to factor XIa. The chain is Coagulation factor XII (F12) from Sus scrofa (Pig).